The primary structure comprises 252 residues: Pyridoxine 5'-phosphate synthase (252 aa).

Asn12 is a binding site for 3-amino-2-oxopropyl phosphate. Residue Asp14 to His15 participates in 1-deoxy-D-xylulose 5-phosphate binding. Arg23 serves as a coordination point for 3-amino-2-oxopropyl phosphate. The Proton acceptor role is filled by His48. The 1-deoxy-D-xylulose 5-phosphate site is built by Arg50 and His55. The Proton acceptor role is filled by Glu75. Thr105 lines the 1-deoxy-D-xylulose 5-phosphate pocket. His199 functions as the Proton donor in the catalytic mechanism. Residues Gly200 and Gly221–His222 contribute to the 3-amino-2-oxopropyl phosphate site.

The protein belongs to the PNP synthase family. In terms of assembly, homooctamer; tetramer of dimers.

The protein resides in the cytoplasm. It catalyses the reaction 3-amino-2-oxopropyl phosphate + 1-deoxy-D-xylulose 5-phosphate = pyridoxine 5'-phosphate + phosphate + 2 H2O + H(+). It functions in the pathway cofactor biosynthesis; pyridoxine 5'-phosphate biosynthesis; pyridoxine 5'-phosphate from D-erythrose 4-phosphate: step 5/5. In terms of biological role, catalyzes the complicated ring closure reaction between the two acyclic compounds 1-deoxy-D-xylulose-5-phosphate (DXP) and 3-amino-2-oxopropyl phosphate (1-amino-acetone-3-phosphate or AAP) to form pyridoxine 5'-phosphate (PNP) and inorganic phosphate. This Cereibacter sphaeroides (strain ATCC 17029 / ATH 2.4.9) (Rhodobacter sphaeroides) protein is Pyridoxine 5'-phosphate synthase.